We begin with the raw amino-acid sequence, 1321 residues long: Adhesion G protein-coupled receptor A3 (1321 aa).

Positions 1 to 33 are cleaved as a signal peptide; the sequence is MEPPGRRRGRAQPPLLLPLSLLALLALLGGGGG. Over 34-761 the chain is Extracellular; that stretch reads GGAAALPAGC…YTQAASLLHP (728 aa). N-linked (GlcNAc...) asparagine glycans are attached at residues Asn-81 and Asn-98. 4 LRR repeats span residues 82–103, 106–127, 130–151, and 154–175; these read RTVT…SFSG, LLER…AFWG, SLKR…IFRG, and NLVR…TFDY. N-linked (GlcNAc...) asparagine glycans are attached at residues Asn-159, Asn-206, Asn-301, Asn-332, Asn-433, Asn-453, and Asn-592. Residues 187-237 enclose the LRRCT domain; sequence EYLLCDCNILWMHRWVKEKNITVRDTRCVYPKSLQAQPVTGVKQELLTCDP. The Ig-like domain maps to 242-340; the sequence is PSFYMTPSHR…GNNTRTVDIV (99 aa). A disulfide bridge connects residues Cys-264 and Cys-324. Residues 583 to 750 form the GAIN-B domain; that stretch reads LDKQLSFKCN…AVLMDLTGSE (168 aa). One copy of the LRR 5 repeat lies at 594–620; it reads SNTFSSLALKNTIVEASIQLPPSLFSP. Asn-652, Asn-687, and Asn-728 each carry an N-linked (GlcNAc...) asparagine glycan. The interval 701–750 is GPS; sequence AARWDFDLLNGQGGWKSDGCHILYSDENITTIQCYSLSNYAVLMDLTGSE. Residues Cys-720 and Cys-734 are joined by a disulfide bond. Residues 762-782 traverse the membrane as a helical segment; the sequence is VVYTTAIILLLCLLAVIVSYI. The Cytoplasmic segment spans residues 783–796; that stretch reads YHHSLIRISLKSWH. A helical transmembrane segment spans residues 797–817; it reads MLVNLCFHIFLTCVVFVGGIT. At 818–826 the chain is on the extracellular side; the sequence is QTRNASICQ. N-linked (GlcNAc...) asparagine glycosylation is present at Asn-821. Residues 827 to 847 form a helical membrane-spanning segment; sequence AVGIILHYSTLATVLWVGVTA. Residues 848 to 876 lie on the Cytoplasmic side of the membrane; sequence RNIYKQVTKKAKRCQDPDEPPPPPRPMLR. The helical transmembrane segment at 877 to 897 threads the bilayer; it reads FYLIGGGIPIIVCGITAAANI. Over 898-919 the chain is Extracellular; that stretch reads KNYGSRPNAPYCWMAWEPSLGA. Residues 920–940 form a helical membrane-spanning segment; the sequence is FYGPASFITFVNCMYFLSIFI. Over 941-996 the chain is Cytoplasmic; that stretch reads QLKRHPERKYELKEPTEEQQRLAANENGEINHQDSMSLSLISTSALENEHTFHSQL. The helical transmembrane segment at 997–1017 threads the bilayer; that stretch reads LGASLTLLLYVALWMFGALAV. Residues 1018-1024 are Extracellular-facing; that stretch reads SLYYPLD. A helical transmembrane segment spans residues 1025–1045; sequence LVFSFVFGATSLSFSAFFVVH. Topologically, residues 1046–1321 are cytoplasmic; sequence HCVNREDVRL…TGLWKHETTV (276 aa). The span at 1073–1083 shows a compositional bias: polar residues; sequence NVQPPNSNGTN. 4 disordered regions span residues 1073–1094, 1198–1219, 1231–1265, and 1294–1321; these read NVQP…NSSA, VEGS…GHSR, QYNP…KKDA, and SNGQ…ETTV. Positions 1233-1250 are enriched in polar residues; it reads NPPQQDSSDACSTLPKSS. Positions 1319–1321 match the PDZ-binding motif; it reads TTV.

This sequence belongs to the G-protein coupled receptor 2 family. Adhesion G-protein coupled receptor (ADGR) subfamily. In terms of assembly, interacts (via PDZ-binding motif) with DLG1.

The protein resides in the membrane. Functionally, orphan receptor that may have a role in planar cell polarity pathway. This is Adhesion G protein-coupled receptor A3 from Homo sapiens (Human).